Consider the following 161-residue polypeptide: uncharacterized protein (161 aa).

A signal peptide (or 21) is located at residues 1-23; sequence MKKFAFLTALFAACYLPNAYAHA. The chain crosses the membrane as a helical span at residues 129 to 149; the sequence is IYLHDILGGIGYIVGIAGLIA.

It localises to the membrane. This is an uncharacterized protein from Haemophilus influenzae (strain ATCC 51907 / DSM 11121 / KW20 / Rd).